Here is an 81-residue protein sequence, read N- to C-terminus: Photosystem I iron-sulfur center (81 aa).

4Fe-4S ferredoxin-type domains lie at 2 to 31 and 39 to 68; these read SHTV…MIPW and IASS…VRVY. Residues cysteine 11, cysteine 14, cysteine 17, cysteine 21, cysteine 48, cysteine 51, cysteine 54, and cysteine 58 each coordinate [4Fe-4S] cluster.

The eukaryotic PSI reaction center is composed of at least 11 subunits. [4Fe-4S] cluster serves as cofactor.

The protein localises to the plastid. Its subcellular location is the chloroplast thylakoid membrane. It carries out the reaction reduced [plastocyanin] + hnu + oxidized [2Fe-2S]-[ferredoxin] = oxidized [plastocyanin] + reduced [2Fe-2S]-[ferredoxin]. Functionally, apoprotein for the two 4Fe-4S centers FA and FB of photosystem I (PSI); essential for photochemical activity. FB is the terminal electron acceptor of PSI, donating electrons to ferredoxin. The C-terminus interacts with PsaA/B/D and helps assemble the protein into the PSI complex. Required for binding of PsaD and PsaE to PSI. PSI is a plastocyanin-ferredoxin oxidoreductase, converting photonic excitation into a charge separation, which transfers an electron from the donor P700 chlorophyll pair to the spectroscopically characterized acceptors A0, A1, FX, FA and FB in turn. This Chaetosphaeridium globosum (Charophycean green alga) protein is Photosystem I iron-sulfur center.